The primary structure comprises 678 residues: Glycine--tRNA ligase beta subunit (678 aa).

This sequence belongs to the class-II aminoacyl-tRNA synthetase family. In terms of assembly, tetramer of two alpha and two beta subunits.

It localises to the cytoplasm. It carries out the reaction tRNA(Gly) + glycine + ATP = glycyl-tRNA(Gly) + AMP + diphosphate. In Streptococcus pneumoniae (strain P1031), this protein is Glycine--tRNA ligase beta subunit.